The primary structure comprises 197 residues: Recombination protein RecR (197 aa).

Residues 56-71 form a C4-type zinc finger; that stretch reads CSRCFNLSAEDPCDIC. Residues 79 to 174 form the Toprim domain; it reads ETICVVAEPR…RVTRIAFGLP (96 aa).

The protein belongs to the RecR family.

Functionally, may play a role in DNA repair. It seems to be involved in an RecBC-independent recombinational process of DNA repair. It may act with RecF and RecO. This chain is Recombination protein RecR, found in Gloeobacter violaceus (strain ATCC 29082 / PCC 7421).